The sequence spans 428 residues: Dihydroorotase (428 aa).

H59 and H61 together coordinate Zn(2+). Substrate contacts are provided by residues 61–63 (HLR) and N93. Zn(2+) contacts are provided by D151, H178, and H231. A substrate-binding site is contributed by N277. Zn(2+) is bound at residue D304. The active site involves D304. Substrate is bound by residues H308 and 322 to 323 (FG).

The protein belongs to the metallo-dependent hydrolases superfamily. DHOase family. Class I DHOase subfamily. Zn(2+) serves as cofactor.

The catalysed reaction is (S)-dihydroorotate + H2O = N-carbamoyl-L-aspartate + H(+). Its pathway is pyrimidine metabolism; UMP biosynthesis via de novo pathway; (S)-dihydroorotate from bicarbonate: step 3/3. Its function is as follows. Catalyzes the reversible cyclization of carbamoyl aspartate to dihydroorotate. This is Dihydroorotase from Bacillus cereus (strain ATCC 10987 / NRS 248).